A 375-amino-acid chain; its full sequence is Carbamoyl phosphate synthase small chain (375 aa).

The segment at 1 to 184 (MVSLYLENGL…LDYKPFDEKT (184 aa)) is CPSase. Residues Ser-44, Gly-240, and Gly-242 each coordinate L-glutamine. One can recognise a Glutamine amidotransferase type-1 domain in the interval 188–375 (IIAVLDFGAK…KEFVELLKDF (188 aa)). The Nucleophile role is filled by Cys-268. Residues Leu-269, Gln-272, Asn-310, and Tyr-313 each contribute to the L-glutamine site. Active-site residues include His-351 and Glu-353.

The protein belongs to the CarA family. As to quaternary structure, composed of two chains; the small (or glutamine) chain promotes the hydrolysis of glutamine to ammonia, which is used by the large (or ammonia) chain to synthesize carbamoyl phosphate. Tetramer of heterodimers (alpha,beta)4.

It carries out the reaction hydrogencarbonate + L-glutamine + 2 ATP + H2O = carbamoyl phosphate + L-glutamate + 2 ADP + phosphate + 2 H(+). The catalysed reaction is L-glutamine + H2O = L-glutamate + NH4(+). It participates in amino-acid biosynthesis; L-arginine biosynthesis; carbamoyl phosphate from bicarbonate: step 1/1. It functions in the pathway pyrimidine metabolism; UMP biosynthesis via de novo pathway; (S)-dihydroorotate from bicarbonate: step 1/3. Its function is as follows. Small subunit of the glutamine-dependent carbamoyl phosphate synthetase (CPSase). CPSase catalyzes the formation of carbamoyl phosphate from the ammonia moiety of glutamine, carbonate, and phosphate donated by ATP, constituting the first step of 2 biosynthetic pathways, one leading to arginine and/or urea and the other to pyrimidine nucleotides. The small subunit (glutamine amidotransferase) binds and cleaves glutamine to supply the large subunit with the substrate ammonia. The sequence is that of Carbamoyl phosphate synthase small chain from Helicobacter pylori (strain ATCC 700392 / 26695) (Campylobacter pylori).